The primary structure comprises 133 residues: Glycophorin-A (133 aa).

T1 and T6 each carry an O-linked (GalNAc...) threonine glycan. A disordered region spans residues 1 to 34 (TETPVTGEQGSATPGNVSNATVTAGKPSATSPGV). The Extracellular portion of the chain corresponds to 1-62 (TETPVTGEQG…SYHQDFSHAE (62 aa)). A glycan (O-linked (GalNAc...) serine) is linked at S11. O-linked (GalNAc...) threonine glycosylation occurs at T13. The N-linked (GlcNAc...) asparagine glycan is linked to N19. Residues T21, T23, and T30 are each glycosylated (O-linked (GalNAc...) threonine). O-linked (GalNAc...) serine glycosylation occurs at S31. N39 carries N-linked (GlcNAc...) asparagine glycosylation. T41 and T48 each carry an O-linked (GalNAc...) threonine glycan. The chain crosses the membrane as a helical span at residues 63 to 85 (ITGIIFAVMAGLLLIIFLIAYLI). Topologically, residues 86-133 (RRMIKKPLPVPKPQDSPDIGTENTADPSELQDTEDPPLTSVEIETPAS) are cytoplasmic. Residues 93-133 (LPVPKPQDSPDIGTENTADPSELQDTEDPPLTSVEIETPAS) form a disordered region.

It belongs to the glycophorin-A family. As to quaternary structure, homodimer. Component of the ankyrin-1 complex in the erythrocyte, composed of ANK1, RHCE, RHAG, SLC4A1, EPB42, GYPA, GYPB and AQP1. Interacts with SLC4A1; a GYPA monomer is bound at each end of the SLC4A1 dimer forming a heterotetramer.

Its subcellular location is the membrane. Its function is as follows. Component of the ankyrin-1 complex, a multiprotein complex involved in the stability and shape of the erythrocyte membrane. Glycophorin A is the major intrinsic membrane protein of the erythrocyte. The N-terminal glycosylated segment, which lies outside the erythrocyte membrane, has MN blood group receptors. Appears to be important for the function of SLC4A1 and is required for high activity of SLC4A1. May be involved in translocation of SLC4A1 to the plasma membrane. This Sus scrofa (Pig) protein is Glycophorin-A.